Consider the following 238-residue polypeptide: Tetrahydromethanopterin S-methyltransferase subunit A 1 (238 aa).

The Cytoplasmic portion of the chain corresponds to 2 to 218 (VEKKSPAEGW…RMFAGMYSGK (217 aa)). 5-hydroxybenzimidazolylcob(I)amide is bound at residue His-84. The chain crosses the membrane as a helical span at residues 219-237 (VQGIMIGLAFTLTLGILLL). Residue Val-238 is a topological domain, extracellular.

Belongs to the MtrA family. As to quaternary structure, the complex is composed of 8 subunits; MtrA, MtrB, MtrC, MtrD, MtrE, MtrF, MtrG and MtrH. 5-hydroxybenzimidazolylcob(I)amide serves as cofactor.

Its subcellular location is the cell membrane. It carries out the reaction 5-methyl-5,6,7,8-tetrahydromethanopterin + coenzyme M + 2 Na(+)(in) = 5,6,7,8-tetrahydromethanopterin + methyl-coenzyme M + 2 Na(+)(out). It functions in the pathway one-carbon metabolism; methanogenesis from CO(2); methyl-coenzyme M from 5,10-methylene-5,6,7,8-tetrahydromethanopterin: step 2/2. Its function is as follows. Part of a complex that catalyzes the formation of methyl-coenzyme M and tetrahydromethanopterin from coenzyme M and methyl-tetrahydromethanopterin. This is an energy-conserving, sodium-ion translocating step. The protein is Tetrahydromethanopterin S-methyltransferase subunit A 1 of Methanothermobacter thermautotrophicus (strain ATCC 29096 / DSM 1053 / JCM 10044 / NBRC 100330 / Delta H) (Methanobacterium thermoautotrophicum).